A 518-amino-acid chain; its full sequence is GMP synthase [glutamine-hydrolyzing] (518 aa).

The Glutamine amidotransferase type-1 domain occupies 11 to 203 (SILVLDFGSQ…AFDVCQAEAN (193 aa)). Cys88 functions as the Nucleophile in the catalytic mechanism. Catalysis depends on residues His177 and Glu179. Positions 204–393 (WSMDDFIDMQ…LGMPSDLVWR (190 aa)) constitute a GMPS ATP-PPase domain. 231-237 (SGGVDSS) contributes to the ATP binding site.

In terms of assembly, homodimer.

It catalyses the reaction XMP + L-glutamine + ATP + H2O = GMP + L-glutamate + AMP + diphosphate + 2 H(+). Its pathway is purine metabolism; GMP biosynthesis; GMP from XMP (L-Gln route): step 1/1. In terms of biological role, catalyzes the synthesis of GMP from XMP. This Lactiplantibacillus plantarum (strain ATCC BAA-793 / NCIMB 8826 / WCFS1) (Lactobacillus plantarum) protein is GMP synthase [glutamine-hydrolyzing].